The primary structure comprises 484 residues: Cathepsin F (484 aa).

Residues 1–19 (MAPWLQLLSLLGLLPGAVA) form the signal peptide. Positions 20–270 (APAQPRAASF…MKQAKSVGDL (251 aa)) are cleaved as a propeptide — activation peptide. N-linked (GlcNAc...) asparagine glycans are attached at residues Asn-160 and Asn-195. Cystine bridges form between Cys-292–Cys-333 and Cys-326–Cys-366. Residue Cys-295 is part of the active site. N-linked (GlcNAc...) asparagine glycosylation is found at Asn-367 and Asn-378. A disulfide bond links Cys-424 and Cys-472. Residue His-431 is part of the active site. N-linked (GlcNAc...) asparagine glycosylation is present at Asn-440. Asn-451 is a catalytic residue.

It belongs to the peptidase C1 family. In terms of tissue distribution, high expression levels in heart, skeletal muscle, brain, testis and ovary; moderate levels in prostate, placenta, liver and colon; and no detectable expression in peripheral leukocytes and thymus.

It is found in the lysosome. The catalysed reaction is The recombinant enzyme cleaves synthetic substrates with Phe and Leu (better than Val) in P2, with high specificity constant (kcat/Km) comparable to that of cathepsin L.. Its function is as follows. Thiol protease which is believed to participate in intracellular degradation and turnover of proteins. Has also been implicated in tumor invasion and metastasis. This Homo sapiens (Human) protein is Cathepsin F (CTSF).